A 443-amino-acid chain; its full sequence is Trigger factor (443 aa).

Residues 164 to 249 (GDVLCVDFVG…AKSLKKAVDP (86 aa)) enclose the PPIase FKBP-type domain.

It belongs to the FKBP-type PPIase family. Tig subfamily.

Its subcellular location is the cytoplasm. The enzyme catalyses [protein]-peptidylproline (omega=180) = [protein]-peptidylproline (omega=0). Its function is as follows. Involved in protein export. Acts as a chaperone by maintaining the newly synthesized protein in an open conformation. Functions as a peptidyl-prolyl cis-trans isomerase. In Gluconobacter oxydans (strain 621H) (Gluconobacter suboxydans), this protein is Trigger factor.